The sequence spans 420 residues: Serine hydroxymethyltransferase (420 aa).

(6S)-5,6,7,8-tetrahydrofolate is bound by residues Leu121 and 125-127 (GHL). Lys230 carries the post-translational modification N6-(pyridoxal phosphate)lysine. Residues Glu246 and 354-356 (SPF) contribute to the (6S)-5,6,7,8-tetrahydrofolate site.

It belongs to the SHMT family. In terms of assembly, homodimer. It depends on pyridoxal 5'-phosphate as a cofactor.

Its subcellular location is the cytoplasm. The enzyme catalyses (6R)-5,10-methylene-5,6,7,8-tetrahydrofolate + glycine + H2O = (6S)-5,6,7,8-tetrahydrofolate + L-serine. It functions in the pathway one-carbon metabolism; tetrahydrofolate interconversion. It participates in amino-acid biosynthesis; glycine biosynthesis; glycine from L-serine: step 1/1. Functionally, catalyzes the reversible interconversion of serine and glycine with tetrahydrofolate (THF) serving as the one-carbon carrier. This reaction serves as the major source of one-carbon groups required for the biosynthesis of purines, thymidylate, methionine, and other important biomolecules. Also exhibits THF-independent aldolase activity toward beta-hydroxyamino acids, producing glycine and aldehydes, via a retro-aldol mechanism. This chain is Serine hydroxymethyltransferase, found in Rickettsia peacockii (strain Rustic).